The primary structure comprises 417 residues: Gamma-glutamyl phosphate reductase (417 aa).

The protein belongs to the gamma-glutamyl phosphate reductase family.

It is found in the cytoplasm. The catalysed reaction is L-glutamate 5-semialdehyde + phosphate + NADP(+) = L-glutamyl 5-phosphate + NADPH + H(+). Its pathway is amino-acid biosynthesis; L-proline biosynthesis; L-glutamate 5-semialdehyde from L-glutamate: step 2/2. Functionally, catalyzes the NADPH-dependent reduction of L-glutamate 5-phosphate into L-glutamate 5-semialdehyde and phosphate. The product spontaneously undergoes cyclization to form 1-pyrroline-5-carboxylate. This is Gamma-glutamyl phosphate reductase from Enterobacter sp. (strain 638).